Reading from the N-terminus, the 236-residue chain is Exosome complex component Rrp4 (236 aa).

In terms of domain architecture, S1 motif spans Gly-64–Lys-133. Residues Glu-141–Ile-199 enclose the KH domain.

This sequence belongs to the RRP4 family. As to quaternary structure, component of the archaeal exosome complex. Forms a trimer of Rrp4 and/or Csl4 subunits. The trimer associates with a hexameric ring-like arrangement composed of 3 Rrp41-Rrp42 heterodimers.

The protein resides in the cytoplasm. In terms of biological role, non-catalytic component of the exosome, which is a complex involved in RNA degradation. Increases the RNA binding and the efficiency of RNA degradation. Confers strong poly(A) specificity to the exosome. This is Exosome complex component Rrp4 from Thermoplasma volcanium (strain ATCC 51530 / DSM 4299 / JCM 9571 / NBRC 15438 / GSS1).